The following is a 320-amino-acid chain: GMP reductase (320 aa).

C174 functions as the Thioimidate intermediate in the catalytic mechanism. An NADP(+)-binding site is contributed by 203-226; sequence IIADGGLRVNGDIAKSIRFGATMC.

It belongs to the IMPDH/GMPR family. GuaC type 2 subfamily.

It carries out the reaction IMP + NH4(+) + NADP(+) = GMP + NADPH + 2 H(+). In terms of biological role, catalyzes the irreversible NADPH-dependent deamination of GMP to IMP. It functions in the conversion of nucleobase, nucleoside and nucleotide derivatives of G to A nucleotides, and in maintaining the intracellular balance of A and G nucleotides. This is GMP reductase from Mesoplasma florum (strain ATCC 33453 / NBRC 100688 / NCTC 11704 / L1) (Acholeplasma florum).